The following is a 347-amino-acid chain: Ribosomal RNA large subunit methyltransferase M (347 aa).

S-adenosyl-L-methionine-binding positions include Ser-184, 217-220 (APGG), Asp-236, Asp-256, and Asp-272. Catalysis depends on Lys-301, which acts as the Proton acceptor.

The protein belongs to the class I-like SAM-binding methyltransferase superfamily. RNA methyltransferase RlmE family. RlmM subfamily. As to quaternary structure, monomer.

Its subcellular location is the cytoplasm. It carries out the reaction cytidine(2498) in 23S rRNA + S-adenosyl-L-methionine = 2'-O-methylcytidine(2498) in 23S rRNA + S-adenosyl-L-homocysteine + H(+). Catalyzes the 2'-O-methylation at nucleotide C2498 in 23S rRNA. This chain is Ribosomal RNA large subunit methyltransferase M, found in Xanthomonas axonopodis pv. citri (strain 306).